The primary structure comprises 1630 residues: Histone transcription regulator 3 homolog (1630 aa).

One copy of the TPR 1 repeat lies at Asn8–Gly42. The segment at Lys325–Asp347 is disordered. A TPR 2 repeat occupies Trp1230–Lys1263.

Belongs to the HIR3 family. In terms of assembly, interacts with hip1 and slm9.

It localises to the nucleus. In terms of biological role, has a role in a nucleosome assembly pathway that is required for the integrity of heterochromatin and proper chromosome segregation. Required for transcriptional silencing in the outer repeat (otr) region of centromeric repeats and the Tf2 long terminal repeat retrotransposons. The protein is Histone transcription regulator 3 homolog (hip3) of Schizosaccharomyces pombe (strain 972 / ATCC 24843) (Fission yeast).